We begin with the raw amino-acid sequence, 208 residues long: dITP/XTP pyrophosphatase (208 aa).

16 to 21 is a substrate binding site; it reads TGNAGK. Mg(2+) contacts are provided by Glu-46 and Asp-75. Catalysis depends on Asp-75, which acts as the Proton acceptor. Substrate contacts are provided by residues Ser-76, 155–158, Lys-178, and 183–184; these read FGYD and HR.

The protein belongs to the HAM1 NTPase family. Homodimer. It depends on Mg(2+) as a cofactor.

It carries out the reaction XTP + H2O = XMP + diphosphate + H(+). The catalysed reaction is dITP + H2O = dIMP + diphosphate + H(+). The enzyme catalyses ITP + H2O = IMP + diphosphate + H(+). Functionally, pyrophosphatase that catalyzes the hydrolysis of nucleoside triphosphates to their monophosphate derivatives, with a high preference for the non-canonical purine nucleotides XTP (xanthosine triphosphate), dITP (deoxyinosine triphosphate) and ITP. Seems to function as a house-cleaning enzyme that removes non-canonical purine nucleotides from the nucleotide pool, thus preventing their incorporation into DNA/RNA and avoiding chromosomal lesions. The protein is dITP/XTP pyrophosphatase of Deinococcus deserti (strain DSM 17065 / CIP 109153 / LMG 22923 / VCD115).